A 162-amino-acid chain; its full sequence is UPF0114 protein PSPA7_5214 (162 aa).

3 helical membrane passes run 15 to 35 (LLAP…IKFF), 53 to 73 (LILV…LVMV), and 136 to 156 (LMWY…MGYL).

This sequence belongs to the UPF0114 family.

It localises to the cell membrane. This is UPF0114 protein PSPA7_5214 from Pseudomonas paraeruginosa (strain DSM 24068 / PA7) (Pseudomonas aeruginosa (strain PA7)).